The following is a 212-amino-acid chain: Ropporin-1 (212 aa).

The RIIa domain occupies 12–43; sequence PELPELLKQFTKAAIRTQPPDLIQWAAEYFGA. Residue Ser56 is modified to Phosphoserine. The interaction with RHPN1 stretch occupies residues 209 to 212; it reads VRLE.

Belongs to the ropporin family. Homodimer. Interacts with AKAP3. May interact with SPA17. Interacts with RHPN1. Interacts with FSCB; the interaction increases upon spermatozoa capacitation conditions. Interacts with CFAP61. In terms of processing, sumoylated, sumoylation decreases upon spermatozoa capacitation conditions.

The protein resides in the cell projection. Its subcellular location is the cilium. It localises to the flagellum. In terms of biological role, important for male fertility. With ROPN1L, involved in fibrous sheath integrity and sperm motility, plays a role in PKA-dependent signaling processes required for spermatozoa capacitation. In Rattus norvegicus (Rat), this protein is Ropporin-1 (Ropn1).